A 388-amino-acid chain; its full sequence is Arginine biosynthesis bifunctional protein ArgJ (388 aa).

Positions 150, 172, 183, 263, 383, and 388 each coordinate substrate. Catalysis depends on threonine 183, which acts as the Nucleophile.

This sequence belongs to the ArgJ family. As to quaternary structure, heterotetramer of two alpha and two beta chains.

It localises to the cytoplasm. It catalyses the reaction N(2)-acetyl-L-ornithine + L-glutamate = N-acetyl-L-glutamate + L-ornithine. The enzyme catalyses L-glutamate + acetyl-CoA = N-acetyl-L-glutamate + CoA + H(+). The protein operates within amino-acid biosynthesis; L-arginine biosynthesis; L-ornithine and N-acetyl-L-glutamate from L-glutamate and N(2)-acetyl-L-ornithine (cyclic): step 1/1. It functions in the pathway amino-acid biosynthesis; L-arginine biosynthesis; N(2)-acetyl-L-ornithine from L-glutamate: step 1/4. Catalyzes two activities which are involved in the cyclic version of arginine biosynthesis: the synthesis of N-acetylglutamate from glutamate and acetyl-CoA as the acetyl donor, and of ornithine by transacetylation between N(2)-acetylornithine and glutamate. This chain is Arginine biosynthesis bifunctional protein ArgJ, found in Corynebacterium efficiens (strain DSM 44549 / YS-314 / AJ 12310 / JCM 11189 / NBRC 100395).